The following is a 219-amino-acid chain: AA11 family lytic polysaccharide monooxygenase A (219 aa).

The N-terminal stretch at 1–18 is a signal peptide; that stretch reads MMLSKVVMGLLTASLAAA. His-19 contributes to the Cu(+) binding site. 3 cysteine pairs are disulfide-bonded: Cys-58–Cys-154, Cys-94–Cys-116, and Cys-185–Cys-218. Asn-80 is a glycosylation site (N-linked (GlcNAc...) asparagine). His-89 contacts Cu(+).

Belongs to the polysaccharide monooxygenase AA11 family. Requires Cu(2+) as cofactor.

Its function is as follows. Lytic polysaccharide monooxygenase (LPMO) that depolymerizes chitin via the oxidation of scissile beta-(1-4)-glycosidic bonds, yielding C1 or C4 oxidation products. Catalysis by LPMOs requires the reduction of the active-site copper from Cu(II) to Cu(I) by a reducing agent and H(2)O(2) or O(2) as a cosubstrate. Has considerable affinity for alpha-chitin and, more so, beta-chitin. Active toward both alpha-chitin and beta-chitin allomorphs and enhances chitin degradation by an endoacting chitinase, in particular for alpha-chitin, and so plays a role in fungal chitin turnover. The catalytic activity increases when supplying reactions with hydrogen peroxide, confirming that it has peroxygenase activity. Does not show activity on phosphoric acid-swollen cellulose (PASC), Avicel, tamarind xyloglucan, birchwood xylan, beechwood xylan, acetyl glucuronoxylan from aspen, ivory nut mannan, acetylated konjac glucomannan, potato starch, heparin, hyaluronic acid, and chitosan. This is AA11 family lytic polysaccharide monooxygenase A from Aspergillus fumigatus (strain CBS 144.89 / FGSC A1163 / CEA10) (Neosartorya fumigata).